A 732-amino-acid polypeptide reads, in one-letter code: MGRKEDNIEKALRIVEHTELVRNIGIVAHIDHGKTTLSDNLIAGAGMMSEELAGKQLVLDYDEQEQARGITINAAVASMVHAFQGKEYLINLIDTPGHVDFGGDVTRAMRAVDGVIVVVDSVEGVMPQTETVIRQALREYVKPVLFINKIDRLINELRLNSDEMQKRFTKIISDVNKLISKYAPKEFTKEWQVSVQDGKVAFGSAYNNWAISVPSMAETKITFKDIVEYVKNGKQKELAQKNQLHKIILNMVIRHLPDPKTAQSYRIKQIWKGDLETEVGKSMVSCDFKGPVAMMVTKIIIDPHAGEIAIGRLFSGTVKKGTDLYISGDGKGKVQTLAMMVGPDRIPVEEVTAGNIAAIVGLKGAIAGSTVSSIENMEPFEPMIHYSEPVVTLAIEAKHTADLPRLIDVLRDISKADPSIQVDINQETGEHLISGMGELHLDVTLYRIKNDYKIEVETSEPIVVYRETVEKKGGPFEGKSPNKHNRFYFEVEPLKPEVIQAIEDGDIPQGSKFKDKKTIIETLVSKGIDREEARGLVCVEGTNIMFDVTRGIQYLDETMELLIEAFTEVMNRGPLANEKVFGVKARLVDAKLHEDSIHRGPAQVIPAGRNSIYGAMCEAKRILLEPVQKVFINVPQEEMGSAINEVQQRRGVIEDMTQEGEEVSLVARIPVSGMFGFASAIRSATGGKVLWSFENAGYQKVPPELQDSVVRSIRERKGLRPEPYDADYYASM.

The 210-residue stretch at 19–228 (ELVRNIGIVA…TKITFKDIVE (210 aa)) folds into the tr-type G domain. GTP contacts are provided by residues 28-35 (AHIDHGKT), 94-98 (DTPGH), and 148-151 (NKID). His598 carries the diphthamide modification.

It belongs to the TRAFAC class translation factor GTPase superfamily. Classic translation factor GTPase family. EF-G/EF-2 subfamily.

The protein localises to the cytoplasm. Catalyzes the GTP-dependent ribosomal translocation step during translation elongation. During this step, the ribosome changes from the pre-translocational (PRE) to the post-translocational (POST) state as the newly formed A-site-bound peptidyl-tRNA and P-site-bound deacylated tRNA move to the P and E sites, respectively. Catalyzes the coordinated movement of the two tRNA molecules, the mRNA and conformational changes in the ribosome. The sequence is that of Elongation factor 2 from Thermoplasma volcanium (strain ATCC 51530 / DSM 4299 / JCM 9571 / NBRC 15438 / GSS1).